We begin with the raw amino-acid sequence, 758 residues long: EMILIN-3 (758 aa).

The N-terminal stretch at 1–21 (MGRRLSVWLCTVAALLSGAQA) is a signal peptide. Residues 54–130 (HKSLCAYVVH…PGLTGESCPE (77 aa)) enclose the EMI domain. Cystine bridges form between Cys-58/Cys-120, Cys-85/Cys-91, and Cys-119/Cys-128. Asn-65 carries an N-linked (GlcNAc...) asparagine glycan. The interval 131–178 (HLTDHGATPPHQEPEPQIPLGQLGPGPRPSPYSREAPRPRGRKGQGPF) is disordered. A coiled-coil region spans residues 379–401 (SQLALISARVDSLERNLQAVTET). The N-linked (GlcNAc...) asparagine glycan is linked to Asn-436. Coiled-coil stretches lie at residues 460–483 (GSTL…ELSP) and 528–567 (AEVK…QLAE). Asn-555 and Asn-609 each carry an N-linked (GlcNAc...) asparagine glycan. 2 coiled-coil regions span residues 642 to 677 (RQVL…ELQH) and 720 to 753 (HIDK…AEVR). An N-linked (GlcNAc...) asparagine glycan is attached at Asn-725.

The protein localises to the secreted. Its subcellular location is the extracellular space. It is found in the extracellular matrix. It localises to the cytoplasm. The polypeptide is EMILIN-3 (Emilin3) (Mus musculus (Mouse)).